The primary structure comprises 1033 residues: Isoleucine--tRNA ligase 2 (1033 aa).

Residues 47 to 57 (PTANGLPHVGH) carry the 'HIGH' region motif. The short motif at 590 to 594 (KMSKS) is the 'KMSKS' region element. Residue Lys-593 participates in ATP binding.

The protein belongs to the class-I aminoacyl-tRNA synthetase family. IleS type 2 subfamily. Monomer. It depends on Zn(2+) as a cofactor.

The protein resides in the cytoplasm. It catalyses the reaction tRNA(Ile) + L-isoleucine + ATP = L-isoleucyl-tRNA(Ile) + AMP + diphosphate. In terms of biological role, catalyzes the attachment of isoleucine to tRNA(Ile). As IleRS can inadvertently accommodate and process structurally similar amino acids such as valine, to avoid such errors it has two additional distinct tRNA(Ile)-dependent editing activities. One activity is designated as 'pretransfer' editing and involves the hydrolysis of activated Val-AMP. The other activity is designated 'posttransfer' editing and involves deacylation of mischarged Val-tRNA(Ile). The sequence is that of Isoleucine--tRNA ligase 2 from Bacillus anthracis.